Here is a 173-residue protein sequence, read N- to C-terminus: Alpha-crystallin A chain (173 aa).

N-acetylmethionine is present on M1. A required for complex formation with BFSP1 and BFSP2 region spans residues 1–63 (MDIAIQHPWF…RTVLDSGISE (63 aa)). The residue at position 6 (Q6) is a Deamidated glutamine; partial. S45 carries the phosphoserine modification. Q50 bears the Deamidated glutamine; partial mark. One can recognise a sHSP domain in the interval 52–162 (LFRTVLDSGI…GHSERAIPVS (111 aa)). K70 bears the N6-acetyllysine mark. A Deamidated glutamine; partial modification is found at Q90. K99 bears the N6-acetyllysine mark. Zn(2+) is bound at residue H100. Residue N101 is modified to Deamidated asparagine; partial. Residues E102 and H107 each contribute to the Zn(2+) site. S122 bears the Phosphoserine mark. A Deamidated asparagine; partial modification is found at N123. The tract at residues 144–173 (PKIPSGVDAGHSERAIPVSREEKPSSAPSS) is disordered. The span at 153 to 167 (GHSERAIPVSREEKP) shows a compositional bias: basic and acidic residues. H154 contributes to the Zn(2+) binding site. O-linked (GlcNAc) serine glycosylation occurs at S162.

It belongs to the small heat shock protein (HSP20) family. In terms of assembly, heteromer composed of three CRYAA and one CRYAB subunits. Inter-subunit bridging via zinc ions enhances stability, which is crucial as there is no protein turn over in the lens. Can also form homodimers and homotetramers (dimers of dimers) which serve as the building blocks of homooligomers. Within homooligomers, the zinc-binding motif is created from residues of 3 different molecules. His-100 and Glu-102 from one molecule are ligands of the zinc ion, and His-107 and His-154 residues from additional molecules complete the site with tetrahedral coordination geometry. Part of a complex required for lens intermediate filament formation composed of BFSP1, BFSP2 and CRYAA. Post-translationally, acetylation at Lys-70 may increase chaperone activity. In terms of processing, undergoes age-dependent proteolytical cleavage at the C-terminus.

The protein resides in the cytoplasm. Its subcellular location is the nucleus. Functionally, contributes to the transparency and refractive index of the lens. Acts as a chaperone, preventing aggregation of various proteins under a wide range of stress conditions. Required for the correct formation of lens intermediate filaments as part of a complex composed of BFSP1, BFSP2 and CRYAA. This chain is Alpha-crystallin A chain (CRYAA), found in Giraffa camelopardalis (Giraffe).